Reading from the N-terminus, the 473-residue chain is GTPase Der (473 aa).

2 EngA-type G domains span residues P5–E170 and L178–M351. Residues G11–S18, D58–I62, N123–D126, G184–S191, D231–V235, and N296–D299 each bind GTP. The 85-residue stretch at F352 to E436 folds into the KH-like domain. Residues P438–L454 show a composition bias toward polar residues. The disordered stretch occupies residues P438–R473. The segment covering R455–R473 has biased composition (basic and acidic residues).

The protein belongs to the TRAFAC class TrmE-Era-EngA-EngB-Septin-like GTPase superfamily. EngA (Der) GTPase family. As to quaternary structure, associates with the 50S ribosomal subunit.

In terms of biological role, GTPase that plays an essential role in the late steps of ribosome biogenesis. The chain is GTPase Der from Psychrobacter arcticus (strain DSM 17307 / VKM B-2377 / 273-4).